The sequence spans 170 residues: Ribosome maturation factor RimM (170 aa).

Residues 96–169 (EGEFYACDVE…VVQLATLEGL (74 aa)) form the PRC barrel domain.

This sequence belongs to the RimM family. In terms of assembly, binds ribosomal protein uS19.

Its subcellular location is the cytoplasm. Its function is as follows. An accessory protein needed during the final step in the assembly of 30S ribosomal subunit, possibly for assembly of the head region. Essential for efficient processing of 16S rRNA. May be needed both before and after RbfA during the maturation of 16S rRNA. It has affinity for free ribosomal 30S subunits but not for 70S ribosomes. The protein is Ribosome maturation factor RimM of Sorangium cellulosum (strain So ce56) (Polyangium cellulosum (strain So ce56)).